The chain runs to 362 residues: tRNA/tmRNA (uracil-C(5))-methyltransferase (362 aa).

Gln-186, Tyr-214, Asn-219, Glu-235, and Asp-295 together coordinate S-adenosyl-L-methionine. Catalysis depends on Cys-320, which acts as the Nucleophile. Glu-354 (proton acceptor) is an active-site residue.

It belongs to the class I-like SAM-binding methyltransferase superfamily. RNA M5U methyltransferase family. TrmA subfamily.

It carries out the reaction uridine(54) in tRNA + S-adenosyl-L-methionine = 5-methyluridine(54) in tRNA + S-adenosyl-L-homocysteine + H(+). The catalysed reaction is uridine(341) in tmRNA + S-adenosyl-L-methionine = 5-methyluridine(341) in tmRNA + S-adenosyl-L-homocysteine + H(+). Functionally, dual-specificity methyltransferase that catalyzes the formation of 5-methyluridine at position 54 (m5U54) in all tRNAs, and that of position 341 (m5U341) in tmRNA (transfer-mRNA). This chain is tRNA/tmRNA (uracil-C(5))-methyltransferase, found in Dechloromonas aromatica (strain RCB).